A 413-amino-acid chain; its full sequence is Phosphopentomutase (413 aa).

Residues Asp11, Asp306, His311, Asp347, His348, and His359 each contribute to the Mn(2+) site.

Belongs to the phosphopentomutase family. The cofactor is Mn(2+).

The protein resides in the cytoplasm. The catalysed reaction is 2-deoxy-alpha-D-ribose 1-phosphate = 2-deoxy-D-ribose 5-phosphate. It catalyses the reaction alpha-D-ribose 1-phosphate = D-ribose 5-phosphate. It participates in carbohydrate degradation; 2-deoxy-D-ribose 1-phosphate degradation; D-glyceraldehyde 3-phosphate and acetaldehyde from 2-deoxy-alpha-D-ribose 1-phosphate: step 1/2. In terms of biological role, isomerase that catalyzes the conversion of deoxy-ribose 1-phosphate (dRib-1-P) and ribose 1-phosphate (Rib-1-P) to deoxy-ribose 5-phosphate (dRib-5-P) and ribose 5-phosphate (Rib-5-P), respectively. This is Phosphopentomutase from Helicobacter acinonychis (strain Sheeba).